Consider the following 109-residue polypeptide: Nucleoid-associated protein Ssed_2851 (109 aa).

Belongs to the YbaB/EbfC family. In terms of assembly, homodimer.

The protein localises to the cytoplasm. It is found in the nucleoid. Binds to DNA and alters its conformation. May be involved in regulation of gene expression, nucleoid organization and DNA protection. This is Nucleoid-associated protein Ssed_2851 from Shewanella sediminis (strain HAW-EB3).